The sequence spans 553 residues: Formate--tetrahydrofolate ligase (553 aa).

Thr-63 to Thr-70 provides a ligand contact to ATP.

This sequence belongs to the formate--tetrahydrofolate ligase family.

The catalysed reaction is (6S)-5,6,7,8-tetrahydrofolate + formate + ATP = (6R)-10-formyltetrahydrofolate + ADP + phosphate. Its pathway is one-carbon metabolism; tetrahydrofolate interconversion. The chain is Formate--tetrahydrofolate ligase from Oenococcus oeni (strain ATCC BAA-331 / PSU-1).